The sequence spans 317 residues: D-alanine--D-alanine ligase (317 aa).

The ATP-grasp domain occupies 103–299 (KHIFRSLNID…FNELVKIIIE (197 aa)). ATP is bound at residue 130 to 183 (KIDYPYVLKPINEGSSIGVYIIFSHEDYLELKDNSSTIMEKMIVEEYIPGIELH). Mg(2+) is bound by residues aspartate 251, glutamate 265, and asparagine 267.

It belongs to the D-alanine--D-alanine ligase family. It depends on Mg(2+) as a cofactor. Mn(2+) is required as a cofactor.

Its subcellular location is the cytoplasm. It catalyses the reaction 2 D-alanine + ATP = D-alanyl-D-alanine + ADP + phosphate + H(+). It participates in cell wall biogenesis; peptidoglycan biosynthesis. Its function is as follows. Cell wall formation. The sequence is that of D-alanine--D-alanine ligase from Wolbachia sp. subsp. Drosophila simulans (strain wRi).